Consider the following 100-residue polypeptide: Class II hydrophobin CU (100 aa).

The signal sequence occupies residues 1–25; it reads MQFSIATIALFLSSAMAAPYSGNSN. 4 disulfide bridges follow: cysteine 32-cysteine 82, cysteine 42-cysteine 72, cysteine 43-cysteine 55, and cysteine 83-cysteine 94.

The protein belongs to the cerato-ulmin hydrophobin family. In terms of assembly, homotetramer. Further self-assembles to form highly ordered films at water-air interfaces through intermolecular interactions.

The protein localises to the secreted. The protein resides in the cell wall. Its function is as follows. Aerial growth, conidiation, and dispersal of filamentous fungi in the environment rely upon a capability of their secreting small amphipathic proteins called hydrophobins (HPBs) with low sequence identity. Class I can self-assemble into an outermost layer of rodlet bundles on aerial cell surfaces, conferring cellular hydrophobicity that supports fungal growth, development and dispersal; whereas Class II form highly ordered films at water-air interfaces through intermolecular interactions but contribute nothing to the rodlet structure. CU is a class II hydrophobin that is implicated in the pathogenicity of this fungus on elm trees. Required for hydrophobicity and adherence of the cells and acts as a parasitic fitness factor by protecting infectious propagules from desiccation. Reduces the interfacial tension of both oil-water and air-water interfaces. The sequence is that of Class II hydrophobin CU from Ophiostoma ulmi (Dutch elm disease fungus).